The primary structure comprises 342 residues: L-threonine 3-dehydrogenase (342 aa).

C38 contributes to the Zn(2+) binding site. Residues T40 and H43 each act as charge relay system in the active site. Zn(2+) contacts are provided by H63, E64, C93, C96, C99, and C107. Residues I175, D195, R200, 262–264 (LGI), and 286–287 (IY) contribute to the NAD(+) site.

This sequence belongs to the zinc-containing alcohol dehydrogenase family. Homotetramer. Zn(2+) is required as a cofactor.

It localises to the cytoplasm. The catalysed reaction is L-threonine + NAD(+) = (2S)-2-amino-3-oxobutanoate + NADH + H(+). The protein operates within amino-acid degradation; L-threonine degradation via oxydo-reductase pathway; glycine from L-threonine: step 1/2. Its function is as follows. Catalyzes the NAD(+)-dependent oxidation of L-threonine to 2-amino-3-ketobutyrate. This Burkholderia ambifaria (strain ATCC BAA-244 / DSM 16087 / CCUG 44356 / LMG 19182 / AMMD) (Burkholderia cepacia (strain AMMD)) protein is L-threonine 3-dehydrogenase.